The chain runs to 236 residues: Transmembrane protein 65 (236 aa).

The N-terminal 57 residues, 1-57 (MSRLLPLLRSRTARSLRPGPAAAAAPRPPSWCCCGRGLLALAAPGGPRALGTHPKKE), are a transit peptide targeting the mitochondrion. Topologically, residues 58–106 (PIEALNTAQGARDFIYSLHSSERSCLLKELHRFESIAIAQEKLEAQPPT) are cytoplasmic. Residues 107–127 (PGQLRYVFIHNAIPFIGFGFL) form a helical membrane-spanning segment. The Extracellular portion of the chain corresponds to 128 to 138 (DNAIMIVAGTH). A helical transmembrane segment spans residues 139–161 (IELSIGIILGISTMAAAALGNLV). The Cytoplasmic portion of the chain corresponds to 162–205 (SDLAGLGLAGYVEALASRLGLSIPDLSPKQVDMWQTRVSSHLGK). A helical transmembrane segment spans residues 206–226 (AVGVTIGCILGMFPLIFFGGG). Residues 227-236 (EDDEKLEKKN) are Extracellular-facing.

As to quaternary structure, monomer. Homodimer. Interacts with GJA1. Interacts weakly with DSP. Interacts with SCN1B.

The protein resides in the cell membrane. It localises to the mitochondrion inner membrane. Functionally, essential for maintaining proper cardiac intercalated disk (ICD) structure and function as well as cardiac conduction velocity in the heart. Its association with SCN1B is required for stabilizing the perinexus in the ICD and for localization of GJA1 and SCN5A to the ICD. May regulate the function of the gap junction protein GJA1 and may contribute to the stability and proper localization of GJA1 to cardiac intercalated disk thereby regulating gap junction communication. Regulates mitochondrial respiration and mitochondrial DNA copy number maintenance. This is Transmembrane protein 65 (TMEM65) from Bos taurus (Bovine).